Here is a 223-residue protein sequence, read N- to C-terminus: Killer cell lectin-like receptor subfamily B member 1B allele C (223 aa).

Over 1-45 the chain is Cytoplasmic; sequence MDTAVVYADLHLARTGEPKRESPPSLSPDTCQCPRWHRLALKLGC. Residues 5 to 10 carry the ITIM motif motif; it reads VVYADL. Positions 31-34 match the LCK-binding motif motif; sequence CQCP. Residues 46–66 traverse the membrane as a helical; Signal-anchor for type II membrane protein segment; that stretch reads ACFILLVLSVIGLGVLVLTLL. Residues 67-223 are Extracellular-facing; that stretch reads QKPLLQNSPA…LKRESTCNDS (157 aa). The 111-residue stretch at 101-211 folds into the C-type lectin domain; sequence HRDKCFHVSQ…CDSDNIWICQ (111 aa). Intrachain disulfides connect cysteine 122-cysteine 210 and cysteine 189-cysteine 202.

In terms of assembly, homodimer; disulfide-linked. Interacts with tyrosine kinase LCK. Binds PTPN6/SHP-1 in a phosphorylation-dependent manner. As to expression, expressed in a subset of natural killer cells.

The protein localises to the membrane. Receptor for CLEC2D/OCIL. Ligand-binding contributes to inhibition of cytotoxic natural killer (NK) cells. May mediate MHC class I-independent 'missing-self' recognition of allografts, tumor cells and virus-infected cells. In Rattus norvegicus (Rat), this protein is Killer cell lectin-like receptor subfamily B member 1B allele C.